The sequence spans 715 residues: Phosphoribosylformylglycinamidine synthase subunit PurL (715 aa).

H33 is an active-site residue. An ATP-binding site is contributed by Y36. E77 contacts Mg(2+). Substrate is bound by residues 78–81 and R100; that span reads SHNH. H79 acts as the Proton acceptor in catalysis. Residue D101 coordinates Mg(2+). Residue Q225 coordinates substrate. Mg(2+) is bound at residue D253. 297–299 contributes to the substrate binding site; the sequence is ESQ. Positions 475 and 512 each coordinate ATP. Residue N513 participates in Mg(2+) binding. A substrate-binding site is contributed by S515.

The protein belongs to the FGAMS family. In terms of assembly, monomer. Part of the FGAM synthase complex composed of 1 PurL, 1 PurQ and 2 PurS subunits.

It localises to the cytoplasm. It catalyses the reaction N(2)-formyl-N(1)-(5-phospho-beta-D-ribosyl)glycinamide + L-glutamine + ATP + H2O = 2-formamido-N(1)-(5-O-phospho-beta-D-ribosyl)acetamidine + L-glutamate + ADP + phosphate + H(+). It functions in the pathway purine metabolism; IMP biosynthesis via de novo pathway; 5-amino-1-(5-phospho-D-ribosyl)imidazole from N(2)-formyl-N(1)-(5-phospho-D-ribosyl)glycinamide: step 1/2. Its function is as follows. Part of the phosphoribosylformylglycinamidine synthase complex involved in the purines biosynthetic pathway. Catalyzes the ATP-dependent conversion of formylglycinamide ribonucleotide (FGAR) and glutamine to yield formylglycinamidine ribonucleotide (FGAM) and glutamate. The FGAM synthase complex is composed of three subunits. PurQ produces an ammonia molecule by converting glutamine to glutamate. PurL transfers the ammonia molecule to FGAR to form FGAM in an ATP-dependent manner. PurS interacts with PurQ and PurL and is thought to assist in the transfer of the ammonia molecule from PurQ to PurL. The chain is Phosphoribosylformylglycinamidine synthase subunit PurL from Methanosarcina acetivorans (strain ATCC 35395 / DSM 2834 / JCM 12185 / C2A).